Here is a 399-residue protein sequence, read N- to C-terminus: Unsaturated chondroitin disaccharide hydrolase (399 aa).

Residue Asp-116 is the Nucleophile of the active site. Residues Asp-116, Asp-176, Gly-234, Thr-236, Arg-248, Trp-252, Ser-366, and Ser-369 each coordinate substrate. The active-site Proton donor is Asp-176.

It belongs to the glycosyl hydrolase 88 family. As to quaternary structure, monomer.

The catalysed reaction is beta-D-4-deoxy-Delta(4)-GlcpA-(1-&gt;3)-beta-D-GalpNAc6S + H2O = N-acetyl-beta-D-galactosamine 6-sulfate + 5-dehydro-4-deoxy-D-glucuronate. Catalyzes the hydrolysis of unsaturated hyaluronate and chondroitin disaccharides. Also degrades unsaturated heparin disaccharides. Releases 4-deoxy-4,5-didehydro D-glucuronic acid or 4-deoxy-4,5-didehydro L-iduronic acid from chondroitin disaccharides, hyaluronan disaccharides and heparin disaccharides and cleaves both glycosidic (1-&gt;3) and (1-&gt;4) bonds. Prefers sulfated glycosaminoglycans compared to unsulfated glycosaminoglycans. Probably required for mammalian cells invasion through the degradation of extracellular sulfated glycosaminoglycans such as chondroitin and hyaluronan. The chain is Unsaturated chondroitin disaccharide hydrolase (ugl) from Streptococcus pyogenes serotype M1.